The chain runs to 491 residues: Ketol-acid reductoisomerase (NADP(+)) (491 aa).

The KARI N-terminal Rossmann domain occupies Ala15 to Ser208. Residues Cys45–Gln48, Arg68, Arg76, Ser78, and Asp108–Gln110 each bind NADP(+). His132 is a catalytic residue. Residue Gly158 participates in NADP(+) binding. 2 consecutive KARI C-terminal knotted domains span residues Ser209–Gln344 and Tyr345–Met484. Asp217, Glu221, Glu389, and Glu393 together coordinate Mg(2+). Substrate is bound at residue Ser414.

This sequence belongs to the ketol-acid reductoisomerase family. Mg(2+) serves as cofactor.

It carries out the reaction (2R)-2,3-dihydroxy-3-methylbutanoate + NADP(+) = (2S)-2-acetolactate + NADPH + H(+). It catalyses the reaction (2R,3R)-2,3-dihydroxy-3-methylpentanoate + NADP(+) = (S)-2-ethyl-2-hydroxy-3-oxobutanoate + NADPH + H(+). It functions in the pathway amino-acid biosynthesis; L-isoleucine biosynthesis; L-isoleucine from 2-oxobutanoate: step 2/4. It participates in amino-acid biosynthesis; L-valine biosynthesis; L-valine from pyruvate: step 2/4. Its function is as follows. Involved in the biosynthesis of branched-chain amino acids (BCAA). Catalyzes an alkyl-migration followed by a ketol-acid reduction of (S)-2-acetolactate (S2AL) to yield (R)-2,3-dihydroxy-isovalerate. In the isomerase reaction, S2AL is rearranged via a Mg-dependent methyl migration to produce 3-hydroxy-3-methyl-2-ketobutyrate (HMKB). In the reductase reaction, this 2-ketoacid undergoes a metal-dependent reduction by NADPH to yield (R)-2,3-dihydroxy-isovalerate. The polypeptide is Ketol-acid reductoisomerase (NADP(+)) (Escherichia coli (strain ATCC 8739 / DSM 1576 / NBRC 3972 / NCIMB 8545 / WDCM 00012 / Crooks)).